The sequence spans 529 residues: Extracellular signal-regulated kinase 1 (529 aa).

Disordered regions lie at residues 1–20 (MEPE…THQS) and 100–131 (QQNQ…SNFN). Polar residues predominate over residues 8–20 (FQSQMDSDNTHQS). Residues 100 to 117 (QQNQQQQSQQMTQQQLQQ) are compositionally biased toward low complexity. Positions 149-439 (YSIVKCIGHG…EALAHPYFQS (291 aa)) constitute a Protein kinase domain. ATP-binding positions include 155 to 163 (IGHGAYGVV) and lysine 178. Aspartate 275 acts as the Proton acceptor in catalysis. At threonine 309 the chain carries Phosphothreonine. A TXY motif is present at residues 309–311 (TEY). The residue at position 311 (tyrosine 311) is a Phosphotyrosine.

The protein belongs to the protein kinase superfamily. CMGC Ser/Thr protein kinase family. MAP kinase subfamily. Requires Mg(2+) as cofactor. Post-translationally, dually phosphorylated on Thr-309 and Tyr-311, which activates the enzyme.

It catalyses the reaction L-seryl-[protein] + ATP = O-phospho-L-seryl-[protein] + ADP + H(+). It carries out the reaction L-threonyl-[protein] + ATP = O-phospho-L-threonyl-[protein] + ADP + H(+). Activated by tyrosine and threonine phosphorylation. Functionally, kinase involved in a signal transduction pathway. The polypeptide is Extracellular signal-regulated kinase 1 (erkA) (Dictyostelium discoideum (Social amoeba)).